Reading from the N-terminus, the 634-residue chain is BTB/POZ domain-containing protein At1g03010 (634 aa).

Residues 38–103 form the BTB domain; it reads SDLTVQVGSS…CYGINIEINL (66 aa). Residues 205-503 form the NPH3 domain; it reads DWWGKSLAVL…VQVLYFEQIR (299 aa). Tyr-444 bears the Phosphotyrosine mark. The stretch at 542-580 forms a coiled coil; sequence RDNYASVRRENRELKLEVARMRMRLTDLEKDHISIKQEL.

The protein belongs to the NPH3 family.

It participates in protein modification; protein ubiquitination. Its function is as follows. May act as a substrate-specific adapter of an E3 ubiquitin-protein ligase complex (CUL3-RBX1-BTB) which mediates the ubiquitination and subsequent proteasomal degradation of target proteins. The chain is BTB/POZ domain-containing protein At1g03010 from Arabidopsis thaliana (Mouse-ear cress).